The primary structure comprises 689 residues: DNA topoisomerase 1 (689 aa).

Positions 3-113 constitute a Toprim domain; that stretch reads DNLVIVESPA…KENRVVFNEI (111 aa). Positions 9 and 82 each coordinate Mg(2+). One can recognise a Topo IA-type catalytic domain in the interval 129-557; the sequence is EMDLVDAQQA…FYNSFKQDVE (429 aa). Residues 163–168 are interaction with DNA; the sequence is SAGRVQ. Tyr-298 acts as the O-(5'-phospho-DNA)-tyrosine intermediate in catalysis. C4-type zinc fingers lie at residues 577–603, 617–645, and 658–681; these read CEVC…FPDC, CPKC…YPEC, and CPKC…CSNC.

The protein belongs to the type IA topoisomerase family. In terms of assembly, monomer. Mg(2+) serves as cofactor.

It catalyses the reaction ATP-independent breakage of single-stranded DNA, followed by passage and rejoining.. Functionally, releases the supercoiling and torsional tension of DNA, which is introduced during the DNA replication and transcription, by transiently cleaving and rejoining one strand of the DNA duplex. Introduces a single-strand break via transesterification at a target site in duplex DNA. The scissile phosphodiester is attacked by the catalytic tyrosine of the enzyme, resulting in the formation of a DNA-(5'-phosphotyrosyl)-enzyme intermediate and the expulsion of a 3'-OH DNA strand. The free DNA strand then undergoes passage around the unbroken strand, thus removing DNA supercoils. Finally, in the religation step, the DNA 3'-OH attacks the covalent intermediate to expel the active-site tyrosine and restore the DNA phosphodiester backbone. This chain is DNA topoisomerase 1, found in Staphylococcus epidermidis (strain ATCC 35984 / DSM 28319 / BCRC 17069 / CCUG 31568 / BM 3577 / RP62A).